A 349-amino-acid chain; its full sequence is PDZ and LIM domain protein 2 (349 aa).

Residues 1 to 84 form the PDZ domain; that stretch reads MALTVNVVGP…PLRLQLDRSQ (84 aa). Disordered regions lie at residues 72-95 and 108-147; these read SASP…NGEG and LRTH…PIAL. Polar residues-rich tracts occupy residues 81–90 and 108–121; these read DRSQTASPGQ and LRTH…QRSA. Phosphoserine is present on residues Ser124, Ser127, Ser129, Ser134, and Ser137. 2 positions are modified to phosphothreonine: Thr138 and Thr142. Ser143 and Ser163 each carry phosphoserine. 2 disordered regions span residues 168–212 and 250–272; these read ATHH…SSLD and ERGG…PTSR. Over residues 176–192 the composition is skewed to polar residues; that stretch reads GQPTSQQAGHSSPSDST. Phosphoserine is present on residues Ser199, Ser204, Ser205, Ser209, Ser210, and Ser263. Low complexity predominate over residues 199–211; the sequence is SPGRPSSPRLSSL. Positions 260–270 are enriched in polar residues; that stretch reads SSLSPKASLPT. In terms of domain architecture, LIM zinc-binding spans 281–341; the sequence is HTCEKCSVNI…EKHARQRYSM (61 aa).

Interacts with alpha-actinins ACTN1 and ACTN4, FLNA and MYH9. Interacts (via LIM zinc-binding domain) with MKRN2. In terms of tissue distribution, highly expressed in cornea and lung. Expressed at intermediate level in sclera and combined tissues of the eye irido-corneal angle. Specifically expressed in the corneal epithelial cells but not in other corneal layers.

It is found in the cytoplasm. It localises to the cytoskeleton. Its function is as follows. Probable adapter protein located at the actin cytoskeleton that promotes cell attachment. Necessary for the migratory capacity of epithelial cells. Overexpression enhances cell adhesion to collagen and fibronectin and suppresses anchorage independent growth. May contribute to tumor cell migratory capacity. This chain is PDZ and LIM domain protein 2 (Pdlim2), found in Rattus norvegicus (Rat).